Here is a 117-residue protein sequence, read N- to C-terminus: NADH-ubiquinone oxidoreductase chain 3 (117 aa).

The next 3 membrane-spanning stretches (helical) occupy residues Ile-4–Ile-24, Ile-60–Ile-80, and Ile-86–His-106.

It belongs to the complex I subunit 3 family.

The protein resides in the mitochondrion membrane. It catalyses the reaction a ubiquinone + NADH + 5 H(+)(in) = a ubiquinol + NAD(+) + 4 H(+)(out). Functionally, core subunit of the mitochondrial membrane respiratory chain NADH dehydrogenase (Complex I) that is believed to belong to the minimal assembly required for catalysis. Complex I functions in the transfer of electrons from NADH to the respiratory chain. The immediate electron acceptor for the enzyme is believed to be ubiquinone. This is NADH-ubiquinone oxidoreductase chain 3 (mt:ND3) from Drosophila melanogaster (Fruit fly).